We begin with the raw amino-acid sequence, 236 residues long: Thymidylate kinase (236 aa).

Position 9–16 (9–16 (GPEGSGKS)) interacts with ATP.

This sequence belongs to the thymidylate kinase family.

The enzyme catalyses dTMP + ATP = dTDP + ADP. In terms of biological role, phosphorylation of dTMP to form dTDP in both de novo and salvage pathways of dTTP synthesis. This chain is Thymidylate kinase, found in Herpetosiphon aurantiacus (strain ATCC 23779 / DSM 785 / 114-95).